The following is a 124-amino-acid chain: Galanin peptides (124 aa).

The N-terminal stretch at 1 to 19 (MARGSVILLGWLLLVVTLS) is a signal peptide. The propeptide occupies 20 to 30 (ATLGLGMPAKE). Position 61 is a threonine amide (threonine 61). Phosphoserine is present on residues serine 117 and serine 118.

The protein belongs to the galanin family. Expressed in retinal progenitor cells and retinal ganglion cells (at protein level).

It is found in the secreted. Endocrine hormone of the central and peripheral nervous systems that binds and activates the G protein-coupled receptors GALR1, GALR2, and GALR3. This small neuropeptide may regulate diverse physiologic functions including contraction of smooth muscle of the gastrointestinal and genitourinary tract, growth hormone and insulin release and adrenal secretion. The sequence is that of Galanin peptides (Gal) from Mus musculus (Mouse).